Here is a 156-residue protein sequence, read N- to C-terminus: MKIQLIAVGTKMPKWVEEGFQEYRRRFPHDMPLELIEITAGKRGKNADIARILQKEGEAMLAAIPKGNRIVTLDIPGKKWDTPELAQQLEAWKLDGRDVSILIGGPEGLAPACKAAAEQSWSLSALTLPHPLVRIVMAESLYRAWSITTNHPYHRE.

Residues Leu73, Gly104, and 123–128 (LSALTL) contribute to the S-adenosyl-L-methionine site.

This sequence belongs to the RNA methyltransferase RlmH family. In terms of assembly, homodimer.

It localises to the cytoplasm. It carries out the reaction pseudouridine(1915) in 23S rRNA + S-adenosyl-L-methionine = N(3)-methylpseudouridine(1915) in 23S rRNA + S-adenosyl-L-homocysteine + H(+). In terms of biological role, specifically methylates the pseudouridine at position 1915 (m3Psi1915) in 23S rRNA. The polypeptide is Ribosomal RNA large subunit methyltransferase H (Vibrio vulnificus (strain CMCP6)).